Here is a 328-residue protein sequence, read N- to C-terminus: uncharacterized protein (328 aa).

Ser-170 is modified (phosphoserine).

The protein resides in the cytoplasm. It localises to the nucleus. This is an uncharacterized protein from Schizosaccharomyces pombe (strain 972 / ATCC 24843) (Fission yeast).